Reading from the N-terminus, the 109-residue chain is B melanoma antigen 2 (109 aa).

Residues 1 to 17 (MAAGVVFLALSAQLLQA) form the signal peptide.

Belongs to the BAGE family. As to expression, not expressed in normal tissues except in testis. Expressed in 22% of melanomas, in bladder and lung carcinomas.

It is found in the secreted. Functionally, unknown. Candidate gene encoding tumor antigens. The chain is B melanoma antigen 2 (BAGE2) from Homo sapiens (Human).